Here is a 276-residue protein sequence, read N- to C-terminus: Adenylyl-sulfate kinase 1, chloroplastic (276 aa).

A chloroplast-targeting transit peptide spans 1–38; the sequence is MIAAGAKSLLGLSMASPKGIFDSNSMSNSRSVVVVRAC. The segment at 46-74 is disordered; the sequence is TLSHNKNGSIPEVKSINGHTGQKQGPLST. The segment covering 62–74 has biased composition (polar residues); sequence NGHTGQKQGPLST. An ATP-binding site is contributed by 108–116; the sequence is GLSGSGKST. Residues Asp-138, Arg-141, Arg-155, Asn-158, 181–182, and Gly-231 each bind substrate; that span reads IS. The Phosphoserine intermediate role is filled by Ser-182.

It belongs to the APS kinase family. As to quaternary structure, homodimer; disulfide-linked. Interacts with APK2. Expressed in root vasculature, root tips, leaf epidermal and guard cells, pollen grains and funiculus of developing seeds.

The protein localises to the plastid. It localises to the chloroplast. The enzyme catalyses adenosine 5'-phosphosulfate + ATP = 3'-phosphoadenylyl sulfate + ADP + H(+). It participates in sulfur metabolism; hydrogen sulfide biosynthesis; sulfite from sulfate: step 2/3. Catalyzes the synthesis of activated sulfate. Essential for plant reproduction and viability. Required for the production of glucosinolates. The chain is Adenylyl-sulfate kinase 1, chloroplastic (APK1) from Arabidopsis thaliana (Mouse-ear cress).